A 223-amino-acid chain; its full sequence is uncharacterized protein (223 aa).

This is an uncharacterized protein from Aquifex aeolicus (strain VF5).